A 317-amino-acid polypeptide reads, in one-letter code: Apolipoprotein E (317 aa).

The first 18 residues, 1–18 (MKALWVALVVTLLAGCRA), serve as a signal peptide directing secretion. 8 tandem repeats follow at residues 79–100 (ALME…EQLS), 101–122 (PVAQ…ARLG), 123–144 (TDME…AMLG), 145–166 (QTTD…KRLL), 167–188 (RDAE…EGAE), 189–210 (RSVS…LGTA), 211–232 (TTST…QKLR), and 233–254 (GRLE…EQLE). The 8 X 22 AA approximate tandem repeats stretch occupies residues 79-254 (ALMEETMKEV…RLDKMREQLE (176 aa)). Methionine 142 is modified (methionine sulfoxide). Residues 157 to 167 (HLRKLRKRLLR) are LDL and other lipoprotein receptors binding. Residue 161 to 164 (LRKR) participates in heparin binding. The segment at 209-289 (TATTSTLGSQ…GWFQPLVEDL (81 aa)) is lipid-binding and lipoprotein association. Threonine 211 carries O-linked (GalNAc...) threonine glycosylation. 228–235 (GQKLRGRL) is a heparin binding site. Positions 265–317 (SQMRLQAETFQARLKGWFQPLVEDLQRQWAGLVEKVQQLAVGTTPTPAASKNQ) are homooligomerization. Positions 277–289 (RLKGWFQPLVEDL) are specificity for association with VLDL. O-linked (GalNAc...) threonine glycosylation is present at threonine 310.

Belongs to the apolipoprotein A1/A4/E family. In terms of assembly, homotetramer. May interact with ABCA1; functionally associated with ABCA1 in the biogenesis of HDLs. May interact with APP/A4 amyloid-beta peptide; the interaction is extremely stable in vitro but its physiological significance is unclear. May interact with MAPT. May interact with MAP2. In the cerebrospinal fluid, interacts with secreted SORL1. Interacts with PMEL; this allows the loading of PMEL luminal fragment on ILVs to induce fibril nucleation. In terms of processing, APOE exists as multiple glycosylated and sialylated glycoforms within cells and in plasma. The extent of glycosylation and sialylation are tissue and context specific. Glycated in plasma VLDL. Post-translationally, phosphorylated by FAM20C in the extracellular medium.

The protein localises to the secreted. The protein resides in the extracellular space. It localises to the extracellular matrix. It is found in the extracellular vesicle. Its subcellular location is the endosome. The protein localises to the multivesicular body. APOE is an apolipoprotein, a protein associating with lipid particles, that mainly functions in lipoprotein-mediated lipid transport between organs via the plasma and interstitial fluids. APOE is a core component of plasma lipoproteins and is involved in their production, conversion and clearance. Apolipoproteins are amphipathic molecules that interact both with lipids of the lipoprotein particle core and the aqueous environment of the plasma. As such, APOE associates with chylomicrons, chylomicron remnants, very low density lipoproteins (VLDL) and intermediate density lipoproteins (IDL) but shows a preferential binding to high-density lipoproteins (HDL). It also binds a wide range of cellular receptors including the LDL receptor/LDLR and the very low-density lipoprotein receptor/VLDLR that mediate the cellular uptake of the APOE-containing lipoprotein particles. Finally, APOE also has a heparin-binding activity and binds heparan-sulfate proteoglycans on the surface of cells, a property that supports the capture and the receptor-mediated uptake of APOE-containing lipoproteins by cells. The polypeptide is Apolipoprotein E (APOE) (Camelus dromedarius (Dromedary)).